Consider the following 501-residue polypeptide: MSDQQLDQHELQQEENKLIAQRKEKLAAVREARAIAFPNDFRRDAYFADLQKQYADKTKEELEAAAIPVKVAGRIMLNRGSFIVLQDSSERLQVYVNRKTLPEETLAEIKTWDLGDIIGAEGVLARSGKGDLYVDMTSVRLLTKSLRPLPDKHHGLTDTEQRYRQRYVDLMVNEETRHTFRVRSQVIAHIRRFLSERGFLEVETPMLQTIPGGAAAKPFETHHNALDMAMFLRIAPELYLKRLVVGGFEKVFEINRNFRNEGVSTRHNPEFTMLEFYQAYADYEDNMDLTEELFRELAQSVLGTTDVPYGDKVFHFGEPFVRLSVFDSILKYNPEITAADLNDVEKARAIAKKAGAKVLGHEGLGKLQVMIFEELVEHKLEQPHFITRYPFEVSPLARRNDEDPSVTDRFELFIGGREIANAYSELNDAEDQAERFMLQVKEKDAGDDEAMHYDADFINALEYGMPPTAGEGIGIDRLVMLLTNSPSIRDVILFPHMRPQA.

Mg(2+)-binding residues include Glu411 and Glu418.

This sequence belongs to the class-II aminoacyl-tRNA synthetase family. Homodimer. Requires Mg(2+) as cofactor.

The protein localises to the cytoplasm. It catalyses the reaction tRNA(Lys) + L-lysine + ATP = L-lysyl-tRNA(Lys) + AMP + diphosphate. This Pseudomonas aeruginosa (strain ATCC 15692 / DSM 22644 / CIP 104116 / JCM 14847 / LMG 12228 / 1C / PRS 101 / PAO1) protein is Lysine--tRNA ligase.